The chain runs to 282 residues: Parvulin-like PPIase (282 aa).

The first 20 residues, 1-20, serve as a signal peptide directing secretion; it reads MKKLSVIFLSVSMLSSIAFC. Residues 138-231 enclose the PpiC domain; it reads KEQIKVAHIL…FGWHIIKVLE (94 aa).

This sequence belongs to the PpiC/parvulin rotamase family.

It localises to the cell outer membrane. It carries out the reaction [protein]-peptidylproline (omega=180) = [protein]-peptidylproline (omega=0). This Rickettsia typhi (strain ATCC VR-144 / Wilmington) protein is Parvulin-like PPIase (plp).